The chain runs to 378 residues: Ribosomal RNA large subunit methyltransferase G (378 aa).

The protein belongs to the methyltransferase superfamily. RlmG family.

It is found in the cytoplasm. The catalysed reaction is guanosine(1835) in 23S rRNA + S-adenosyl-L-methionine = N(2)-methylguanosine(1835) in 23S rRNA + S-adenosyl-L-homocysteine + H(+). Its function is as follows. Specifically methylates the guanine in position 1835 (m2G1835) of 23S rRNA. In Salmonella agona (strain SL483), this protein is Ribosomal RNA large subunit methyltransferase G.